An 88-amino-acid chain; its full sequence is Large ribosomal subunit protein bL31 (88 aa).

Residues 67–88 form a disordered region; that stretch reads MGSVDNATSEKKSATDETSKES. Positions 74–88 are enriched in basic and acidic residues; the sequence is TSEKKSATDETSKES.

This sequence belongs to the bacterial ribosomal protein bL31 family. Type A subfamily. Part of the 50S ribosomal subunit.

Binds the 23S rRNA. This chain is Large ribosomal subunit protein bL31, found in Synechococcus sp. (strain CC9311).